A 466-amino-acid polypeptide reads, in one-letter code: ATP synthase subunit beta (466 aa).

ATP is bound at residue 152 to 159; sequence GGAGVGKT.

It belongs to the ATPase alpha/beta chains family. F-type ATPases have 2 components, CF(1) - the catalytic core - and CF(0) - the membrane proton channel. CF(1) has five subunits: alpha(3), beta(3), gamma(1), delta(1), epsilon(1). CF(0) has three main subunits: a(1), b(2) and c(9-12). The alpha and beta chains form an alternating ring which encloses part of the gamma chain. CF(1) is attached to CF(0) by a central stalk formed by the gamma and epsilon chains, while a peripheral stalk is formed by the delta and b chains.

The protein resides in the cell inner membrane. The enzyme catalyses ATP + H2O + 4 H(+)(in) = ADP + phosphate + 5 H(+)(out). Functionally, produces ATP from ADP in the presence of a proton gradient across the membrane. The catalytic sites are hosted primarily by the beta subunits. The protein is ATP synthase subunit beta of Helicobacter pylori (strain HPAG1).